A 108-amino-acid polypeptide reads, in one-letter code: UPF0145 protein Npun_F4817 (108 aa).

The protein belongs to the UPF0145 family.

The polypeptide is UPF0145 protein Npun_F4817 (Nostoc punctiforme (strain ATCC 29133 / PCC 73102)).